A 203-amino-acid polypeptide reads, in one-letter code: RNA pyrophosphohydrolase (203 aa).

In terms of domain architecture, Nudix hydrolase spans 6-149; it reads GFRPNVGIIL…KRNVYQMALT (144 aa). The Nudix box signature appears at 38–59; the sequence is GGIKHGESPEQAMFRELHEEVG. Residues 170-203 form a disordered region; sequence RAHRRDEGSEHNDHLDPTGPHDAGASVSEPKQAE. The span at 173–185 shows a compositional bias: basic and acidic residues; sequence RRDEGSEHNDHLD.

This sequence belongs to the Nudix hydrolase family. RppH subfamily. The cofactor is a divalent metal cation.

In terms of biological role, accelerates the degradation of transcripts by removing pyrophosphate from the 5'-end of triphosphorylated RNA, leading to a more labile monophosphorylated state that can stimulate subsequent ribonuclease cleavage. The sequence is that of RNA pyrophosphohydrolase from Leptothrix cholodnii (strain ATCC 51168 / LMG 8142 / SP-6) (Leptothrix discophora (strain SP-6)).